The following is a 261-amino-acid chain: Thiazole synthase (261 aa).

K101 (schiff-base intermediate with DXP) is an active-site residue. 1-deoxy-D-xylulose 5-phosphate contacts are provided by residues G162, A188–G189, and N210–T211.

The protein belongs to the ThiG family. As to quaternary structure, homotetramer. Forms heterodimers with either ThiH or ThiS.

Its subcellular location is the cytoplasm. It carries out the reaction [ThiS sulfur-carrier protein]-C-terminal-Gly-aminoethanethioate + 2-iminoacetate + 1-deoxy-D-xylulose 5-phosphate = [ThiS sulfur-carrier protein]-C-terminal Gly-Gly + 2-[(2R,5Z)-2-carboxy-4-methylthiazol-5(2H)-ylidene]ethyl phosphate + 2 H2O + H(+). Its pathway is cofactor biosynthesis; thiamine diphosphate biosynthesis. Its function is as follows. Catalyzes the rearrangement of 1-deoxy-D-xylulose 5-phosphate (DXP) to produce the thiazole phosphate moiety of thiamine. Sulfur is provided by the thiocarboxylate moiety of the carrier protein ThiS. In vitro, sulfur can be provided by H(2)S. This is Thiazole synthase from Azoarcus sp. (strain BH72).